Consider the following 145-residue polypeptide: 3-hydroxyacyl-[acyl-carrier-protein] dehydratase FabZ (145 aa).

H51 is an active-site residue.

It belongs to the thioester dehydratase family. FabZ subfamily.

The protein resides in the cytoplasm. The catalysed reaction is a (3R)-hydroxyacyl-[ACP] = a (2E)-enoyl-[ACP] + H2O. In terms of biological role, involved in unsaturated fatty acids biosynthesis. Catalyzes the dehydration of short chain beta-hydroxyacyl-ACPs and long chain saturated and unsaturated beta-hydroxyacyl-ACPs. This Staphylococcus epidermidis (strain ATCC 35984 / DSM 28319 / BCRC 17069 / CCUG 31568 / BM 3577 / RP62A) protein is 3-hydroxyacyl-[acyl-carrier-protein] dehydratase FabZ.